The chain runs to 942 residues: Isoleucine--tRNA ligase (942 aa).

Residues 58-68 carry the 'HIGH' region motif; the sequence is PYANGDIHIGH. Residue Glu-566 coordinates L-isoleucyl-5'-AMP. The short motif at 607–611 is the 'KMSKS' region element; the sequence is KMSKS. Lys-610 contacts ATP. Zn(2+)-binding residues include Cys-905, Cys-908, Cys-925, and Cys-928.

Belongs to the class-I aminoacyl-tRNA synthetase family. IleS type 1 subfamily. As to quaternary structure, monomer. Zn(2+) is required as a cofactor.

The protein localises to the cytoplasm. The catalysed reaction is tRNA(Ile) + L-isoleucine + ATP = L-isoleucyl-tRNA(Ile) + AMP + diphosphate. Catalyzes the attachment of isoleucine to tRNA(Ile). As IleRS can inadvertently accommodate and process structurally similar amino acids such as valine, to avoid such errors it has two additional distinct tRNA(Ile)-dependent editing activities. One activity is designated as 'pretransfer' editing and involves the hydrolysis of activated Val-AMP. The other activity is designated 'posttransfer' editing and involves deacylation of mischarged Val-tRNA(Ile). The polypeptide is Isoleucine--tRNA ligase (Vibrio campbellii (strain ATCC BAA-1116)).